Reading from the N-terminus, the 1585-residue chain is Sterol 3-beta-glucosyltransferase (1585 aa).

Positions 1–18 (MSPPISPTPPPLQPPFPP) are enriched in pro residues. Disordered stretches follow at residues 1 to 151 (MSPP…ESSF), 177 to 225 (PWEE…PTHT), and 249 to 279 (YQYA…LPKG). 3 stretches are compositionally biased toward polar residues: residues 65-92 (DQAT…NAIT), 105-123 (DAQT…STHE), and 132-148 (PRTS…QMAE). A compositionally biased stretch (acidic residues) spans 178–194 (WEEDDDSDDGEDDDEFI). Residues 255–273 (ETSSRRTSAAGSESSSEGE) are compositionally biased toward low complexity. The GRAM 1 domain occupies 387 to 555 (ERLMEVFGLE…EAIVDVEKSP (169 aa)). In terms of domain architecture, PH spans 438–530 (LLVKSGPLHK…WVKAIQKVMF (93 aa)). Disordered stretches follow at residues 625 to 645 (TSHA…LGMA) and 666 to 852 (DGEP…GSES). A compositionally biased stretch (basic and acidic residues) spans 670–689 (LEEHSQGPHHNDEDASHLPH). 3 stretches are compositionally biased toward polar residues: residues 760-785 (TDSS…QASV), 806-817 (NKPSVVDSNSAE), and 827-840 (SWTS…QMVK). The GRAM 2 domain maps to 862–933 (RKFRTFFALS…RDLYGLKAQK (72 aa)). Residues S1043, R1044, D1046, I1358, H1360, H1373, G1377, T1378, D1397, and Q1398 each coordinate UDP-alpha-D-glucose. The interval 1499-1552 (NRVRSRSRSRSRSSQGRFSPRRHTVDDDGWSVVSGGSRSRSGSASAVTSPERRP) is disordered. A compositionally biased stretch (low complexity) spans 1529–1545 (SVVSGGSRSRSGSASAV).

This sequence belongs to the glycosyltransferase 28 family.

It localises to the cytoplasm. The protein localises to the membrane. The catalysed reaction is a sterol + UDP-alpha-D-glucose = a sterol 3-beta-D-glucoside + UDP + H(+). It catalyses the reaction ergosterol + UDP-alpha-D-glucose = ergosteryl 3-beta-D-glucoside + UDP + H(+). In terms of biological role, sterol glycosyltransferase responsible for the glycosylation of ergosterol to form ergosterol-glucoside. The chain is Sterol 3-beta-glucosyltransferase from Cryptococcus neoformans var. neoformans serotype D (strain B-3501A) (Filobasidiella neoformans).